A 182-amino-acid polypeptide reads, in one-letter code: Flavin prenyltransferase UbiX (182 aa).

Residues 9–11 (GAS), Ser-35, 86–89 (SIKT), and Arg-121 each bind FMN. Dimethylallyl phosphate contacts are provided by Tyr-151 and Arg-167.

Belongs to the UbiX/PAD1 family.

The enzyme catalyses dimethylallyl phosphate + FMNH2 = prenylated FMNH2 + phosphate. Flavin prenyltransferase that catalyzes the synthesis of the prenylated FMN cofactor (prenyl-FMN) for 4-hydroxy-3-polyprenylbenzoic acid decarboxylase UbiD. The prenyltransferase is metal-independent and links a dimethylallyl moiety from dimethylallyl monophosphate (DMAP) to the flavin N5 and C6 atoms of FMN. This chain is Flavin prenyltransferase UbiX, found in Archaeoglobus fulgidus (strain ATCC 49558 / DSM 4304 / JCM 9628 / NBRC 100126 / VC-16).